We begin with the raw amino-acid sequence, 718 residues long: Polyribonucleotide nucleotidyltransferase (718 aa).

Mg(2+) is bound by residues Asp497 and Asp503. The 60-residue stretch at 564 to 623 folds into the KH domain; sequence PRLLTMRIDPDMIGLVIGPGGKTVKSITEQTKTKIDIDDDGTVTISASEAEQAERAKQLI. The region spanning 633–701 is the S1 motif domain; it reads GEVYVGRVTR…NKGRLNLTRL (69 aa).

The protein belongs to the polyribonucleotide nucleotidyltransferase family. Mg(2+) is required as a cofactor.

It is found in the cytoplasm. It carries out the reaction RNA(n+1) + phosphate = RNA(n) + a ribonucleoside 5'-diphosphate. Its function is as follows. Involved in mRNA degradation. Catalyzes the phosphorolysis of single-stranded polyribonucleotides processively in the 3'- to 5'-direction. The polypeptide is Polyribonucleotide nucleotidyltransferase (Gloeothece citriformis (strain PCC 7424) (Cyanothece sp. (strain PCC 7424))).